A 1113-amino-acid chain; its full sequence is Protein translocase subunit SecA (1113 aa).

ATP-binding positions include Gln175, 193 to 197 (GEGKT), and Asp694. Positions 1042 to 1072 (RHAAEQRTDMSKYRTQKDDIEAQQKAQRDAA) are enriched in basic and acidic residues. The segment at 1042 to 1113 (RHAAEQRTDM…KFKQCHGRNL (72 aa)) is disordered. Residues Cys1097, Cys1099, Cys1108, and His1109 each coordinate Zn(2+). The span at 1103 to 1113 (KKFKQCHGRNL) shows a compositional bias: basic residues.

It belongs to the SecA family. As to quaternary structure, monomer and homodimer. Part of the essential Sec protein translocation apparatus which comprises SecA, SecYEG and auxiliary proteins SecDF. Other proteins may also be involved. Requires Zn(2+) as cofactor.

The protein localises to the cell inner membrane. It localises to the cytoplasm. It carries out the reaction ATP + H2O + cellular proteinSide 1 = ADP + phosphate + cellular proteinSide 2.. Functionally, part of the Sec protein translocase complex. Interacts with the SecYEG preprotein conducting channel. Has a central role in coupling the hydrolysis of ATP to the transfer of proteins into and across the cell membrane, serving as an ATP-driven molecular motor driving the stepwise translocation of polypeptide chains across the membrane. This chain is Protein translocase subunit SecA, found in Porphyromonas gingivalis (strain ATCC 33277 / DSM 20709 / CIP 103683 / JCM 12257 / NCTC 11834 / 2561).